A 336-amino-acid chain; its full sequence is Phospho-N-acetylmuramoyl-pentapeptide-transferase (336 aa).

10 helical membrane-spanning segments follow: residues 3–23 (LTLIAAIISFMVSAFTMPYFI), 53–73 (GGTVFLLVATAVSLLVSLFSI), 78–98 (SLALISGILSIVVIYGIIGFL), 118–138 (LALQLAGGLMFYFLHVSPSGI), 143–163 (VFGYQLPLGIFYLFFVLFWVV), 174–194 (GIDGLASISVVISLVTYGVIA), 200–220 (FDVLLLIGAMIGALLGFFCFN), 226–246 (VFMGDVGSLALGAMLAAISIA), 251–271 (WTLLIIGIVYVLETSSVMLQV), and 316–336 (AFLWGVGSLASLLVLAILYVF).

Belongs to the glycosyltransferase 4 family. MraY subfamily. Mg(2+) serves as cofactor.

It is found in the cell membrane. The catalysed reaction is UDP-N-acetyl-alpha-D-muramoyl-L-alanyl-gamma-D-glutamyl-L-lysyl-D-alanyl-D-alanine + di-trans,octa-cis-undecaprenyl phosphate = Mur2Ac(oyl-L-Ala-gamma-D-Glu-L-Lys-D-Ala-D-Ala)-di-trans,octa-cis-undecaprenyl diphosphate + UMP. It functions in the pathway cell wall biogenesis; peptidoglycan biosynthesis. Its function is as follows. Catalyzes the initial step of the lipid cycle reactions in the biosynthesis of the cell wall peptidoglycan: transfers peptidoglycan precursor phospho-MurNAc-pentapeptide from UDP-MurNAc-pentapeptide onto the lipid carrier undecaprenyl phosphate, yielding undecaprenyl-pyrophosphoryl-MurNAc-pentapeptide, known as lipid I. The chain is Phospho-N-acetylmuramoyl-pentapeptide-transferase from Streptococcus pyogenes serotype M49 (strain NZ131).